The sequence spans 401 residues: MNILVINCGSSSLKFQLIDTDTEKVLANGICDRIGIEGSVLQYKNKEGKKSEKKEAMPNHTKAIEMVLEALTNKQNGAISSLDDIRAIGHRVVHGGEFFKESVLINDTVIAHIKECSDLAPLHNPANLMGIDVCKQKMPNTPMVAVFDTAFHQSMPPQAYTYGVPYEWYEKHKVRRYGFHGTSHKYVSQRTTEFLGLDYHNSKIIVCHLGNGSSISAIKNGKCVDTSMGLTPLEGLIMGTRCGDLDPAILEYISKREDLDIQSILNVLNKKSGVLGISGVSSDFRDLLDADLGGNERAKLARLAFAYRVMKYVGAYCAAMNGVDAVSFCAGVGENAKFIRGMIVKHLEFLGVELDEEANNICGQEAIISTANSKVKVCVIPTNEELVIARDTRAIVSQLKD.

Residue asparagine 7 coordinates Mg(2+). Residue lysine 14 coordinates ATP. Residue arginine 91 coordinates substrate. Residue aspartate 148 is the Proton donor/acceptor of the active site. Residues 208–212 (HLGNG), 283–285 (DFR), and 331–335 (GVGEN) contribute to the ATP site. Glutamate 384 provides a ligand contact to Mg(2+).

This sequence belongs to the acetokinase family. In terms of assembly, homodimer. The cofactor is Mg(2+). Mn(2+) serves as cofactor.

It is found in the cytoplasm. The enzyme catalyses acetate + ATP = acetyl phosphate + ADP. It functions in the pathway metabolic intermediate biosynthesis; acetyl-CoA biosynthesis; acetyl-CoA from acetate: step 1/2. Functionally, catalyzes the formation of acetyl phosphate from acetate and ATP. Can also catalyze the reverse reaction. This chain is Acetate kinase, found in Helicobacter hepaticus (strain ATCC 51449 / 3B1).